Here is a 124-residue protein sequence, read N- to C-terminus: Fluoride-specific ion channel FluC (124 aa).

4 consecutive transmembrane segments (helical) span residues 1–21 (MIAL…LRFA), 37–57 (GTLA…GLFL), 69–89 (GLIV…LDTV), and 99–119 (LALG…WAGL). Na(+) contacts are provided by Gly76 and Thr79.

Belongs to the fluoride channel Fluc/FEX (TC 1.A.43) family.

The protein localises to the cell inner membrane. It catalyses the reaction fluoride(in) = fluoride(out). Na(+) is not transported, but it plays an essential structural role and its presence is essential for fluoride channel function. In terms of biological role, fluoride-specific ion channel. Important for reducing fluoride concentration in the cell, thus reducing its toxicity. This Pseudomonas putida (strain ATCC 700007 / DSM 6899 / JCM 31910 / BCRC 17059 / LMG 24140 / F1) protein is Fluoride-specific ion channel FluC.